The following is an 874-amino-acid chain: Alanine--tRNA ligase (874 aa).

Zn(2+)-binding residues include His563, His567, Cys665, and His669.

This sequence belongs to the class-II aminoacyl-tRNA synthetase family. It depends on Zn(2+) as a cofactor.

It is found in the cytoplasm. The catalysed reaction is tRNA(Ala) + L-alanine + ATP = L-alanyl-tRNA(Ala) + AMP + diphosphate. Catalyzes the attachment of alanine to tRNA(Ala) in a two-step reaction: alanine is first activated by ATP to form Ala-AMP and then transferred to the acceptor end of tRNA(Ala). Also edits incorrectly charged Ser-tRNA(Ala) and Gly-tRNA(Ala) via its editing domain. This is Alanine--tRNA ligase from Histophilus somni (strain 129Pt) (Haemophilus somnus).